A 127-amino-acid chain; its full sequence is E3 ubiquitin-protein ligase PPP1R11 (127 aa).

Disordered regions lie at residues 1-55 and 70-127; these read MAEA…EHMG and AFGE…PMQH. Ala2 bears the N-acetylalanine mark. A compositionally biased stretch (low complexity) spans 11-23; the sequence is ETVTETTVTVTTE. Over residues 40–55 the composition is skewed to basic and acidic residues; that stretch reads KKVEWSSDTVDNEHMG. The tract at residues 53–63 is atypical RING finger domain 1; that stretch reads HMGRRSSKCCC. Ser74 and Ser75 each carry phosphoserine. Thr76 bears the Phosphothreonine mark. Ser78 carries the phosphoserine modification. Residues 86-95 form an atypical RING finger domain 2 region; it reads CGHTHCVRGH. Basic residues predominate over residues 90–100; that stretch reads HCVRGHRKGRR. Positions 103 to 127 are enriched in pro residues; sequence TPGPTPTTPPQPPDPSQPPPGPMQH. Thr110 carries the phosphothreonine modification.

In terms of assembly, interacts with TLR2 and UBE2D2. In terms of processing, auto-ubiquitinated.

The enzyme catalyses S-ubiquitinyl-[E2 ubiquitin-conjugating enzyme]-L-cysteine + [acceptor protein]-L-lysine = [E2 ubiquitin-conjugating enzyme]-L-cysteine + N(6)-ubiquitinyl-[acceptor protein]-L-lysine.. Its pathway is protein modification; protein ubiquitination. Functionally, atypical E3 ubiquitin-protein ligase which ubiquitinates TLR2 at 'Lys-754' leading to its degradation by the proteasome. Plays a role in regulating inflammatory cytokine release and gram-positive bacterial clearance by functioning, in part, through the ubiquitination and degradation of TLR2. Inhibitor of protein phosphatase 1. This chain is E3 ubiquitin-protein ligase PPP1R11 (Ppp1r11), found in Rattus norvegicus (Rat).